The primary structure comprises 317 residues: Acetyl-coenzyme A carboxylase carboxyl transferase subunit alpha (317 aa).

The CoA carboxyltransferase C-terminal domain occupies 37-292 (RLEKKAEKLR…RICLKKHLDD (256 aa)).

Belongs to the AccA family. In terms of assembly, acetyl-CoA carboxylase is a heterohexamer composed of biotin carboxyl carrier protein (AccB), biotin carboxylase (AccC) and two subunits each of ACCase subunit alpha (AccA) and ACCase subunit beta (AccD).

It is found in the cytoplasm. It catalyses the reaction N(6)-carboxybiotinyl-L-lysyl-[protein] + acetyl-CoA = N(6)-biotinyl-L-lysyl-[protein] + malonyl-CoA. The protein operates within lipid metabolism; malonyl-CoA biosynthesis; malonyl-CoA from acetyl-CoA: step 1/1. Functionally, component of the acetyl coenzyme A carboxylase (ACC) complex. First, biotin carboxylase catalyzes the carboxylation of biotin on its carrier protein (BCCP) and then the CO(2) group is transferred by the carboxyltransferase to acetyl-CoA to form malonyl-CoA. This chain is Acetyl-coenzyme A carboxylase carboxyl transferase subunit alpha, found in Syntrophotalea carbinolica (strain DSM 2380 / NBRC 103641 / GraBd1) (Pelobacter carbinolicus).